Here is a 186-residue protein sequence, read N- to C-terminus: MVEIFNYSTSVYEKHSSTNKLVSDFRKEIQMEGAAIRDIAKHAQILDMTPKPSALSTLMQTNKKTCWASFSPPANFHKQRFSTPYLVPSLGSPDKQDQDMEKISSYLKVLTRGKFSYRSETSPLLKKNKPSSDQDDTSKQSFDQDEEEDALVHEGKILLRALDQGIKSSNLLIDYVISRIFQFVQG.

Residues 121–146 (TSPLLKKNKPSSDQDDTSKQSFDQDE) form a disordered region.

This sequence belongs to the chlamydial CPn_0422/CT_273/TC_0545 family.

This is an uncharacterized protein from Chlamydia muridarum (strain MoPn / Nigg).